Consider the following 609-residue polypeptide: Glutamine--fructose-6-phosphate aminotransferase [isomerizing] (609 aa).

C2 (nucleophile; for GATase activity) is an active-site residue. A Glutamine amidotransferase type-2 domain is found at 2–219 (CGIFGYLGNQ…SGEFAIVSQG (218 aa)). 2 consecutive SIS domains span residues 285-426 (LSDV…VHGA) and 458-599 (WAQP…IDCP). The active-site For Fru-6P isomerization activity is the K604.

In terms of assembly, homodimer.

It is found in the cytoplasm. The enzyme catalyses D-fructose 6-phosphate + L-glutamine = D-glucosamine 6-phosphate + L-glutamate. Functionally, catalyzes the first step in hexosamine metabolism, converting fructose-6P into glucosamine-6P using glutamine as a nitrogen source. In Chlamydia pneumoniae (Chlamydophila pneumoniae), this protein is Glutamine--fructose-6-phosphate aminotransferase [isomerizing].